The sequence spans 252 residues: Uridylate kinase (252 aa).

Residue 23-26 (KLSG) participates in ATP binding. G65 is a binding site for UMP. The ATP site is built by G66 and R70. UMP-binding positions include D85 and 146 to 153 (LGAPFFST). ATP-binding residues include T173, Q174, Y179, and D182.

Belongs to the UMP kinase family. Homohexamer.

It is found in the cytoplasm. The catalysed reaction is UMP + ATP = UDP + ADP. Its pathway is pyrimidine metabolism; CTP biosynthesis via de novo pathway; UDP from UMP (UMPK route): step 1/1. Its activity is regulated as follows. Inhibited by UTP. Catalyzes the reversible phosphorylation of UMP to UDP. This is Uridylate kinase from Thermobifida fusca (strain YX).